The primary structure comprises 49 residues: Glutathione peroxidase (49 aa).

The protein belongs to the glutathione peroxidase family.

The enzyme catalyses 2 glutathione + H2O2 = glutathione disulfide + 2 H2O. Inhibited by Cu(2+), SDS and DTT. Activity is slightly increased by Fe(2+), Mn(2+), triton X-100 and EDTA. Glutathione peroxidase which may protect the cell from oxidative damage. This is Glutathione peroxidase from Lactiplantibacillus plantarum (Lactobacillus plantarum).